A 1585-amino-acid polypeptide reads, in one-letter code: uncharacterized protein (1585 aa).

Positions 12 to 59 (DKISRKLRMIQGNAERLKRAANGPLIFEAEDRTERVMRQIDRSANRLT) form a coiled coil. Disordered regions lie at residues 586–627 (PKRT…SLPR) and 645–692 (IRRR…NPTR). The span at 618–627 (TATGPTSLPR) shows a compositional bias: polar residues. A compositionally biased stretch (basic residues) spans 645-655 (IRRRRGKRVLG). Positions 661–672 (NRMNPSDSSIAV) are enriched in polar residues. Phosphoserine is present on residues S970 and S972.

To B.subtilis XkdO.

This is an uncharacterized protein from Bacillus subtilis (strain 168).